Consider the following 470-residue polypeptide: Poly(A) polymerase catalytic subunit (470 aa).

Active-site residues include Asp192 and Asp194.

The protein belongs to the poxviridae poly(A) polymerase catalytic subunit family. As to quaternary structure, heterodimer of a large (catalytic) subunit and a small (regulatory) subunit.

The enzyme catalyses RNA(n) + ATP = RNA(n)-3'-adenine ribonucleotide + diphosphate. Its function is as follows. Polymerase that creates the 3'-poly(A) tail of mRNA's. This Deerpox virus (strain Mule deer/United States/W-848-83/1983) (DPV) protein is Poly(A) polymerase catalytic subunit (PAPL).